A 149-amino-acid chain; its full sequence is Ribonuclease pancreatic (149 aa).

Residues 1 to 25 (MGLEKSFILFSLLVLVLGWVQPSLG) form the signal peptide. Substrate-binding residues include Lys32 and Arg35. His37 functions as the Proton acceptor in the catalytic mechanism. 4 disulfides stabilise this stretch: Cys51–Cys109, Cys65–Cys120, Cys83–Cys135, and Cys90–Cys97. Residues 66–70 (KPVNT), Lys91, and Arg110 each bind substrate. Residue His144 is the Proton donor of the active site.

This sequence belongs to the pancreatic ribonuclease family. In terms of assembly, monomer. Interacts with and forms tight 1:1 complexes with RNH1. Dimerization of two such complexes may occur. Interaction with RNH1 inhibits this protein. Pancreas.

It is found in the secreted. It carries out the reaction an [RNA] containing cytidine + H2O = an [RNA]-3'-cytidine-3'-phosphate + a 5'-hydroxy-ribonucleotide-3'-[RNA].. It catalyses the reaction an [RNA] containing uridine + H2O = an [RNA]-3'-uridine-3'-phosphate + a 5'-hydroxy-ribonucleotide-3'-[RNA].. In terms of biological role, endonuclease that catalyzes the cleavage of RNA on the 3' side of pyrimidine nucleotides. Acts on single-stranded and double-stranded RNA. This chain is Ribonuclease pancreatic (RNASE1), found in Leopoldamys edwardsi (Edwards's long-tailed giant rat).